The following is a 530-amino-acid chain: uncharacterized protein (530 aa).

The tract at residues 362–408 (NLTPKLNKTNEDIKSDSTSQPQGFPEGNRRVMENPETKVSKTDDEEM) is disordered. Basic and acidic residues predominate over residues 388–403 (GNRRVMENPETKVSKT).

It belongs to the IIV-6 030L family.

This is an uncharacterized protein from Invertebrate iridescent virus 6 (IIV-6).